The primary structure comprises 508 residues: Cell death protein 3 (508 aa).

A propeptide spanning residues 1-223 (MMRQDRRNLL…FHEEDMNYVD (223 aa)) is cleaved from the precursor. One can recognise a CARD domain in the interval 2–91 (MRQDRRNLLE…HELAAVLEPL (90 aa)). 2 disordered regions span residues 106-130 (PMSP…TRVH) and 148-184 (YTRA…SSAN). Positions 118-127 (LSPSTFSSPT) are enriched in polar residues. Positions 171 to 184 (SPSNSFQSQPSSAN) are enriched in low complexity. Residues histidine 317 and cysteine 360 contribute to the active site. The interval 392–407 (GPLFNFLGCVRPQAQQ) is required for interaction with ced-4.

This sequence belongs to the peptidase C14A family. As to quaternary structure, the active form is probably a heterodimer of the p17 subunit with either the p15 or p13 subunit which are all derived from the precursor by autocatalysis. Interacts with octameric ced-4 (two ced-3 zymogens per one ced-4 octamer); the interaction causes the autoproteolytic cleavage and activation of ced-3. Processed ced-3 also interacts with ced-4 octamer to form a stable holoenzyme. Interacts (via large subunit p17) with csp-3; the interaction prevents ced-3 autoactivation and delays ced-4-induced ced-3 processing. Interacts (via large subunit p17 or small subunit p13 or p15) with csp-2; the interaction inhibits ced-3 autoactivation. Interacts (via propeptide) with nucleoporin npp-14; the interaction tethers ced-3 to the nuclear membrane and prevents its autoprocessing in absence of ced-4. Interacts with dct-1. May form a complex composed of ced-3, ced-4 and mac-1. In terms of processing, autocatalytic cleavage removes the propeptide and generates the catalytic subunit p17 and two non-catalytic subunits p15 and p13; autoproteolysis is induced by ced-4 oligomer. Cleaved by caspase csp-1 probably at Asp-146 and Asp-376.

The protein localises to the nucleus membrane. It localises to the perikaryon. Its subcellular location is the synapse. It is found in the mitochondrion. The protein resides in the cytoplasm. The protein localises to the perinuclear region. It carries out the reaction Strict requirement for an Asp residue at position P1 and has a preferred cleavage sequence of Asp-Glu-Val-Asp-|-.. Its activity is regulated as follows. Octameric ced-4 activates zymogen autoprocessing and enhances activity of processed ced-3. Zymogen autoactivation is inhibited by csp-3. csp-3 has no effect on active ced-3. Zymogen autoactivation is inhibited by csp-2. Inhibited by cysteine protease inhibitor iodoacetic acid (CH3COOI). Inhibited by benzyloxycarbonyl-DEVD-fluoro-methyl ketone (zDEVD-fmk). Inhibited by benzyloxycarbonyl-VAD-fluoro-methyl ketone (zVAD-fmk). Not inhibited by N-[N-(L-3-transcarboxirane-2-carbonyl)-leucyl]-agmatine (E-64) or by the serine and cysteine protease inhibitor L-1-chloro-3-[4-to-osylamido]-7-amino-2-heptanone (TLCK). Its function is as follows. Acts as a cysteine protease in controlling programmed cell death (apoptosis) by proteolytically activating or inactivating a wide range of substrates. Component of the egl-1, ced-9, ced-4 and ced-3 apoptotic signaling cascade required for the initiation of programmed cell death in cells fated to die during embryonic and postembryonic development. During oogenesis, required for germline apoptosis downstream of ced-9 and ced-4 but independently of egl-1. By cleaving and activating ced-8, promotes phosphatidylserine exposure on the surface of apoptotic cells; phosphatidylserine is a specific marker only present at the surface of apoptotic cells and acts as a specific signal for engulfment. By cleaving and converting dcr-1 into a deoxyribonuclease (DNase), promotes apoptotic chromosomal DNA fragmentation. By cleaving mitochondrial fission protein drp-1, may regulate the removal of mitochondria during apoptosis. During germline apoptosis, cleaves translation initiation factor ifg-1 (isoform p170) promoting cap-independent translation. During male tail morphogenesis, promotes apoptosis of the tail-spike cell downstream of ced-4 but independently of egl-1 and ced-9. By cleaving cnt-1, prevents the activation of the prosurvival akt-1/2 signaling pathway and thus promotes apoptosis. Downstream of ced-4, may play a role in sex-specific cell apoptosis by cleaving sex-determining protein fem-1. May regulate germline apoptosis in response to DNA damage, probably downstream of let-60/ras and mpk-1 pathway. Cleaves ced-9 in vitro. Cleaves csp-2 isoform b resulting in the removal of the propeptide and the generation of csp-2 subunit p31 in vitro. Independently of its apoptotic role has additional functions. Probably by cleaving and thereby activating actin-severing protein gsnl-1, required for the elimination of transient presynaptic components during larval development downstream of egl-1, ced-9 and ced-4 pathway. Together with ain-1, a component of the miRNA-induced-silencing complex (miRISC), regulates temporal cell fate patterning during larval development. Acts in cell fate patterning by cleaving heterochronic protein lin-28, likely promoting its degradation. Also cleaves heterochronic protein lin-14 and exonuclease disl-2 in vitro. Downstream of calreticulin crt-1 and ced-4 and independently of egl-1 and ced-9, plays a role in the initial steps of axonal regrowth following axotomy. Cleaves 14-3-3-like protein ftt-2, tubulin tbb-2 and calreticulin crt-1 in vitro. Plays also a role in resistance to S.typhimurium-mediated infection. The polypeptide is Cell death protein 3 (Caenorhabditis remanei (Caenorhabditis vulgaris)).